The sequence spans 232 residues: MPRAAPPALLLPLLGLAAAAAADCPSSTWVQFQDSCYIFLQEAIKVESIEDVRNQCTNHGADMISIHNEEENAFILDTLKKQWKDPADILLGMFFDTDDASFKWFDNSNMTFNKWSDQEDDEELVDTCAFLHTKTGDWKKGNCEVSSVEGTLCKAAIPYEKKYLSDNRILISALVIASTVILTVLGAVVWFLYKRSLDSGFTTVFSAAHQSPYNDDCVLVVAEENEYDIQFN.

An N-terminal signal peptide occupies residues 1-22 (MPRAAPPALLLPLLGLAAAAAA). Topologically, residues 23–168 (DCPSSTWVQF…YEKKYLSDNR (146 aa)) are extracellular. Positions 32–152 (FQDSCYIFLQ…CEVSSVEGTL (121 aa)) constitute a C-type lectin domain. Asn-109 carries N-linked (GlcNAc...) asparagine glycosylation. An intrachain disulfide couples Cys-128 to Cys-143. Residues 169–189 (ILISALVIASTVILTVLGAVV) form a helical membrane-spanning segment. Residues 190–232 (WFLYKRSLDSGFTTVFSAAHQSPYNDDCVLVVAEENEYDIQFN) are Cytoplasmic-facing.

Its subcellular location is the membrane. It is found in the cell projection. The protein localises to the filopodium. It localises to the cytoplasm. The protein resides in the cell cortex. Its subcellular location is the microvillus. Its function is as follows. Potential multifunctional C-type lectin receptor that may play roles in endocytosis and phagocytosis as well as in cell adhesion and migration. This Bos taurus (Bovine) protein is CD302 antigen.